The chain runs to 312 residues: Ribosomal protein L11 methyltransferase (312 aa).

4 residues coordinate S-adenosyl-L-methionine: T160, G181, D203, and N246.

Belongs to the methyltransferase superfamily. PrmA family.

It is found in the cytoplasm. The enzyme catalyses L-lysyl-[protein] + 3 S-adenosyl-L-methionine = N(6),N(6),N(6)-trimethyl-L-lysyl-[protein] + 3 S-adenosyl-L-homocysteine + 3 H(+). Functionally, methylates ribosomal protein L11. The protein is Ribosomal protein L11 methyltransferase of Staphylococcus aureus (strain bovine RF122 / ET3-1).